Here is a 116-residue protein sequence, read N- to C-terminus: Signal recognition particle 14 kDa protein (116 aa).

This sequence belongs to the SRP14 family. As to quaternary structure, heterodimer with ZK512.4/SRP9; binds RNA as heterodimer. Component of a signal recognition particle (SRP) complex that consists of a 7SL RNA molecule of 300 nucleotides and six protein subunits: srpa-72, srpa-68, SRP54, F37F2.2/SRP19, F25G6.8/SRP14 and ZK512.4/SRP9.

It localises to the cytoplasm. Component of the signal recognition particle (SRP) complex, a ribonucleoprotein complex that mediates the cotranslational targeting of secretory and membrane proteins to the endoplasmic reticulum (ER). F37F2.2/srpa-19 together with F25G6.8/srpa-14 and the Alu portion of the SRP RNA, constitutes the elongation arrest domain of SRP. The complex of F37F2.2/srpa-19 and F25G6.8/srpa-14 is required for SRP RNA binding. The polypeptide is Signal recognition particle 14 kDa protein (Caenorhabditis elegans).